We begin with the raw amino-acid sequence, 2290 residues long: Protein Ycf2 (2290 aa).

1638–1645 (GSIGTGRS) lines the ATP pocket.

The protein belongs to the Ycf2 family.

The protein localises to the plastid. Its subcellular location is the chloroplast stroma. Probable ATPase of unknown function. Its presence in a non-photosynthetic plant (Epifagus virginiana) and experiments in tobacco indicate that it has an essential function which is probably not related to photosynthesis. The protein is Protein Ycf2 of Phalaenopsis aphrodite subsp. formosana (Moth orchid).